The chain runs to 435 residues: Ribulose bisphosphate carboxylase large chain (435 aa).

An N6,N6,N6-trimethyllysine modification is found at Lys-5. Substrate-binding residues include Asn-114 and Thr-164. Catalysis depends on Lys-166, which acts as the Proton acceptor. Residue Lys-168 coordinates substrate. Lys-192, Asp-194, and Glu-195 together coordinate Mg(2+). Lys-192 is modified (N6-carboxylysine). His-285 (proton acceptor) is an active-site residue. Substrate-binding residues include Arg-286, His-318, and Ser-370.

The protein belongs to the RuBisCO large chain family. Type I subfamily. In terms of assembly, heterohexadecamer of 8 large chains and 8 small chains; disulfide-linked. The disulfide link is formed within the large subunit homodimers. The cofactor is Mg(2+). The disulfide bond which can form in the large chain dimeric partners within the hexadecamer appears to be associated with oxidative stress and protein turnover.

The protein localises to the plastid. Its subcellular location is the chloroplast. The enzyme catalyses 2 (2R)-3-phosphoglycerate + 2 H(+) = D-ribulose 1,5-bisphosphate + CO2 + H2O. It carries out the reaction D-ribulose 1,5-bisphosphate + O2 = 2-phosphoglycolate + (2R)-3-phosphoglycerate + 2 H(+). Functionally, ruBisCO catalyzes two reactions: the carboxylation of D-ribulose 1,5-bisphosphate, the primary event in carbon dioxide fixation, as well as the oxidative fragmentation of the pentose substrate in the photorespiration process. Both reactions occur simultaneously and in competition at the same active site. This chain is Ribulose bisphosphate carboxylase large chain, found in Drosera burmannii (Burmese sundew).